We begin with the raw amino-acid sequence, 234 residues long: Uridylate kinase (234 aa).

Residues 8–11, G51, and R55 each bind ATP; that span reads KLSG. UMP is bound by residues D68 and 129–136; that span reads TSNPFFTT. Positions 156, 162, and 165 each coordinate ATP.

Belongs to the UMP kinase family. As to quaternary structure, homohexamer.

It is found in the cytoplasm. The enzyme catalyses UMP + ATP = UDP + ADP. It functions in the pathway pyrimidine metabolism; CTP biosynthesis via de novo pathway; UDP from UMP (UMPK route): step 1/1. Inhibited by UTP. Functionally, catalyzes the reversible phosphorylation of UMP to UDP. This Fervidobacterium nodosum (strain ATCC 35602 / DSM 5306 / Rt17-B1) protein is Uridylate kinase.